The primary structure comprises 97 residues: HssA/B-like protein 44 (97 aa).

Disordered regions lie at residues 1–22 (MTLF…SSIA) and 62–97 (ASTS…CGCN). Basic residues predominate over residues 72-84 (RPGRGHGGPHGHG). Gly residues predominate over residues 85-97 (RGGSGSGSSCGCN).

The protein belongs to the hssA/B family.

In Dictyostelium discoideum (Social amoeba), this protein is HssA/B-like protein 44 (hssl44).